A 439-amino-acid polypeptide reads, in one-letter code: Trigger factor (439 aa).

The PPIase FKBP-type domain maps to 163–248 (GDRVTIDYRG…LNKLEAPKLP (86 aa)).

Belongs to the FKBP-type PPIase family. Tig subfamily.

It is found in the cytoplasm. It carries out the reaction [protein]-peptidylproline (omega=180) = [protein]-peptidylproline (omega=0). Its function is as follows. Involved in protein export. Acts as a chaperone by maintaining the newly synthesized protein in an open conformation. Functions as a peptidyl-prolyl cis-trans isomerase. The sequence is that of Trigger factor from Nitrosomonas europaea (strain ATCC 19718 / CIP 103999 / KCTC 2705 / NBRC 14298).